Reading from the N-terminus, the 113-residue chain is Iron-sulfur cluster insertion protein ErpA (113 aa).

Cys41, Cys105, and Cys107 together coordinate iron-sulfur cluster.

It belongs to the HesB/IscA family. As to quaternary structure, homodimer. Iron-sulfur cluster serves as cofactor.

Required for insertion of 4Fe-4S clusters for at least IspG. In Actinobacillus pleuropneumoniae serotype 3 (strain JL03), this protein is Iron-sulfur cluster insertion protein ErpA.